Here is a 191-residue protein sequence, read N- to C-terminus: UPF0312 protein Sbal195_3198 (191 aa).

The N-terminal stretch at methionine 1 to alanine 22 is a signal peptide.

The protein belongs to the UPF0312 family. Type 1 subfamily.

It is found in the periplasm. This is UPF0312 protein Sbal195_3198 from Shewanella baltica (strain OS195).